A 344-amino-acid chain; its full sequence is Dihydroorotase (344 aa).

Residues His-13 and His-15 each coordinate Zn(2+). Substrate is bound by residues 15–17 and Asn-41; that span reads HLR. 3 residues coordinate Zn(2+): Lys-99, His-136, and His-174. N6-carboxylysine is present on Lys-99. Residue His-136 coordinates substrate. Leu-219 provides a ligand contact to substrate. A Zn(2+)-binding site is contributed by Asp-247. Asp-247 is an active-site residue. His-251 and Ala-263 together coordinate substrate.

Belongs to the metallo-dependent hydrolases superfamily. DHOase family. Class II DHOase subfamily. In terms of assembly, homodimer. Zn(2+) is required as a cofactor.

It catalyses the reaction (S)-dihydroorotate + H2O = N-carbamoyl-L-aspartate + H(+). It functions in the pathway pyrimidine metabolism; UMP biosynthesis via de novo pathway; (S)-dihydroorotate from bicarbonate: step 3/3. Catalyzes the reversible cyclization of carbamoyl aspartate to dihydroorotate. The protein is Dihydroorotase of Idiomarina loihiensis (strain ATCC BAA-735 / DSM 15497 / L2-TR).